The sequence spans 504 residues: L-carnitine/gamma-butyrobetaine antiporter (504 aa).

Transmembrane regions (helical) follow at residues 10 to 30 (IEPKVFFPPLIIVGILCWLTV), 51 to 71 (WGWAFEWYMVVMLFGWFWLVF), 92 to 112 (IFMMFASCTSAAVLFWGSIEI), 143 to 163 (GPLPWATYSFLSVAFAYFFFV), 195 to 215 (FYLVALIFAMGTSLGLATPLV), 231 to 251 (LDAIIITCWIILNAICVACGL), 263 to 283 (SYLSFLMLGWVFIVSGASFIM), 316 to 336 (WTVFYWAWWVIYAIQMSIFLA), 347 to 367 (LCFGMVMGLTASTWILWTVLG), 403 to 423 (LSTATMWGFFILCFIATVTLI), 446 to 466 (LLVRIGWSILVGIIGIVLLAL), and 475 to 495 (AIIAGGCPLFFVNIMVTLSFI).

This sequence belongs to the BCCT transporter (TC 2.A.15) family. CaiT subfamily. As to quaternary structure, homotrimer.

Its subcellular location is the cell inner membrane. The enzyme catalyses 4-(trimethylamino)butanoate(in) + (R)-carnitine(out) = 4-(trimethylamino)butanoate(out) + (R)-carnitine(in). The protein operates within amine and polyamine metabolism; carnitine metabolism. Functionally, catalyzes the exchange of L-carnitine for gamma-butyrobetaine. The chain is L-carnitine/gamma-butyrobetaine antiporter from Escherichia fergusonii (strain ATCC 35469 / DSM 13698 / CCUG 18766 / IAM 14443 / JCM 21226 / LMG 7866 / NBRC 102419 / NCTC 12128 / CDC 0568-73).